Here is a 962-residue protein sequence, read N- to C-terminus: Atromentin synthetase nps3 (962 aa).

The adenylation (A) domain stretch occupies residues 55 to 469 (FISSSAHDSS…SGRIKDTVIV (415 aa)). The Carrier domain maps to 601 to 679 (VPATITETAF…DLAKYIDALV (79 aa)). A thiolation and peptide carrier (T) domain region spans residues 606-676 (TETAFAKIFA…VLRDLAKYID (71 aa)). Ser638 carries the post-translational modification O-(pantetheine 4'-phosphoryl)serine. The segment at 702–805 (PIFFVHPGVG…VGLINIPPHI (104 aa)) is thioesterase (TE) domain.

It belongs to the ATP-dependent AMP-binding enzyme family.

Its pathway is secondary metabolite biosynthesis. Functionally, an L-tyrosine:2-oxoglutarate aminotransferase (probably amt1) and atromentin synthetase nps3 catalyze consecutive steps to turn over L-tyrosine into atromentin, which represents the generic precursor molecule for the entire terphenylquinone and pulvinic acid family of pigments, which are widely distributed secondary metabolites in homobasidiomycetes. The first step catalyzed by the aminotransferase converts L-tyrosine in to 4-hydroxyphenylpyruvate (4-HPP). Adenylation of two 4-HPP monomers by the nps3 adenylation (A) domain, covalent tethering of the monomers as a thioester and oxoester onto the nps3 thiolation (T) and thioesterase (TE) domains, respectively, and symmetric C-C-bond formation between two monomers catalyzed by the nps3 TE domain leads to atromentin. Follow-up products of atromentin in S.lacrymans include atromentic acid, xerocomic acid, isoxerocomic acid and variegatic acid. This chain is Atromentin synthetase nps3 (nps3), found in Serpula lacrymans var. lacrymans (strain S7.9) (Dry rot fungus).